The sequence spans 268 residues: NAC transcription factor 29 (268 aa).

The NAC domain occupies Leu-9–Lys-161. A DNA-binding region spans residues Val-106–Leu-167.

Expressed in senescing leaves, petals and sepals.

It is found in the nucleus. Transcription activator that binds to, and transactivates the promoter of the abscisic aldehyde oxidase AAO3. Promotes chlorophyll degradation in leaves by enhancing transcription of AAO3, which leads to increased levels of the senescence-inducing hormone abscisic acid (ABA). Involved in the control of dehydration in senescing leaves. Binds to the DNA sequence 5'-CACGTAAGT-3' of SAG113 promoter. SAG113 acts as a negative regulator of ABA signaling for stomatal closure in leaves, and controls water loss during leaf senescence. Transcription factor of the NAC family involved in senescence. May function in the transition between active cell division and cell expansion. Required for normal seed development and morphology. In Arabidopsis thaliana (Mouse-ear cress), this protein is NAC transcription factor 29 (NAC029).